Consider the following 149-residue polypeptide: Cell division protein SepF (149 aa).

Positions 12-57 (SNEEDDYYEEDGYEQSQQQEQQTTQQTSSQPRFVRQTTQSQTPAGL) are disordered. Positions 13–24 (NEEDDYYEEDGY) are enriched in acidic residues. The segment covering 25–41 (EQSQQQEQQTTQQTSSQ) has biased composition (low complexity). Positions 46-57 (RQTTQSQTPAGL) are enriched in polar residues.

The protein belongs to the SepF family. As to quaternary structure, homodimer. Interacts with FtsZ.

It localises to the cytoplasm. Its function is as follows. Cell division protein that is part of the divisome complex and is recruited early to the Z-ring. Probably stimulates Z-ring formation, perhaps through the cross-linking of FtsZ protofilaments. Its function overlaps with FtsA. The polypeptide is Cell division protein SepF (Leuconostoc mesenteroides subsp. mesenteroides (strain ATCC 8293 / DSM 20343 / BCRC 11652 / CCM 1803 / JCM 6124 / NCDO 523 / NBRC 100496 / NCIMB 8023 / NCTC 12954 / NRRL B-1118 / 37Y)).